The following is a 451-amino-acid chain: Putative metabolite transport protein YyaJ (451 aa).

Topologically, residues 1–29 are cytoplasmic; it reads MNTIFKQKNTHPFSNAANRLDRLPISRVH. A helical transmembrane segment spans residues 30–50; the sequence is FQVLTALGIVYFFDLADLFTL. The Extracellular portion of the chain corresponds to 51-60; that stretch reads SNVAPALIEH. A helical membrane pass occupies residues 61–81; it reads WGIPLSTIANVTAASFLGMFL. The Cytoplasmic portion of the chain corresponds to 82–97; that stretch reads GASLGGRLSDRIGRKK. A helical membrane pass occupies residues 98 to 118; the sequence is ALNLFVFVFSIASLCNAAAWD. At 119–124 the chain is on the extracellular side; sequence IPSLMT. The chain crosses the membrane as a helical span at residues 125–145; it reads FRFLTGFGVAAAMVITNSYLA. Residues 146 to 157 lie on the Cytoplasmic side of the membrane; that stretch reads EFFPSSVRGKYI. Residues 158–178 form a helical membrane-spanning segment; it reads SFCAMIGLIGVPITNIVSAFV. Topologically, residues 179 to 182 are extracellular; sequence IPLG. The helical transmembrane segment at 183–203 threads the bilayer; that stretch reads SWGWRLVFVWGAVGLIYFFFI. At 204–270 the chain is on the cytoplasmic side; the sequence is HRLEESPRWH…LLKGRNLKIT (67 aa). The helical transmembrane segment at 271 to 291 threads the bilayer; sequence IVLSAVWIFETFGFYGFASWV. Over 292-305 the chain is Extracellular; that stretch reads PSLLKSNGVTMENT. A helical transmembrane segment spans residues 306–326; sequence LWYNVLHSVGAPLGALLGSMI. Over 327–333 the chain is Cytoplasmic; it reads SERFQRK. A helical transmembrane segment spans residues 334-354; the sequence is WILAASAFLTAIAGLLYGMTF. The Extracellular portion of the chain corresponds to 355 to 357; sequence IPI. The helical transmembrane segment at 358–378 threads the bilayer; that stretch reads MIIVFGFIVNITERVFTSNLY. Over 379 to 396 the chain is Cytoplasmic; that stretch reads AYTSEPYPTEYRSSGSGL. The helical transmembrane segment at 397 to 417 threads the bilayer; it reads AYGLGRFSNIFGSLLVGFIAV. Over 418 to 421 the chain is Extracellular; that stretch reads QLGY. The chain crosses the membrane as a helical span at residues 422–442; it reads ISVFLFIGGCWLACSLLLIFF. Over 443-451 the chain is Cytoplasmic; the sequence is GPNTNAKQI.

This sequence belongs to the major facilitator superfamily. Sugar transporter (TC 2.A.1.1) family.

It localises to the cell membrane. This is Putative metabolite transport protein YyaJ (yyaJ) from Bacillus subtilis (strain 168).